The primary structure comprises 96 residues: UPF0235 protein SO_3356 (96 aa).

The protein belongs to the UPF0235 family.

The chain is UPF0235 protein SO_3356 from Shewanella oneidensis (strain ATCC 700550 / JCM 31522 / CIP 106686 / LMG 19005 / NCIMB 14063 / MR-1).